Consider the following 286-residue polypeptide: Polyamine aminopropyltransferase (286 aa).

Residues 5 to 238 (PLWHETLHDH…GIMTFAWASD (234 aa)) form the PABS domain. Residue Q33 coordinates S-methyl-5'-thioadenosine. Spermidine-binding residues include H64 and D88. S-methyl-5'-thioadenosine contacts are provided by residues E108 and 140 to 141 (DG). The Proton acceptor role is filled by D158. 158–161 (DCTD) contacts spermidine. Residue P165 coordinates S-methyl-5'-thioadenosine.

It belongs to the spermidine/spermine synthase family. As to quaternary structure, homodimer or homotetramer.

It localises to the cytoplasm. It carries out the reaction S-adenosyl 3-(methylsulfanyl)propylamine + putrescine = S-methyl-5'-thioadenosine + spermidine + H(+). Its pathway is amine and polyamine biosynthesis; spermidine biosynthesis; spermidine from putrescine: step 1/1. Its function is as follows. Catalyzes the irreversible transfer of a propylamine group from the amino donor S-adenosylmethioninamine (decarboxy-AdoMet) to putrescine (1,4-diaminobutane) to yield spermidine. In Klebsiella pneumoniae (strain 342), this protein is Polyamine aminopropyltransferase.